Here is a 379-residue protein sequence, read N- to C-terminus: MADSCCIRLHLLASVFLLLFSSFNLQGIAAENLSKQKLTSLILQNEIVKEVNENPNAGWKAAFNDRFANATVAEFKRLLGVIQTPKTAYLGVPIVRHDLSLKLPKEFDARTAWSHCTSIRRILVGYILNNVLLWSTITLWFWFLLGHCGSCWAFGAVESLSDRFCIKYNLNVSLSANDVIACCGLLCGFGCNGGFPMGAWLYFKYHGVVTQECDPYFDNTGCSHPGCEPTYPTPKCERKCVSRNQLWGESKHYGVGAYRINPDPQDIMAEVYKNGPVEVAFTVYEDFAHYKSGVYKYITGTKIGGHAVKLIGWGTSDDGEDYWLLANQWNRSWGDDGYFKIRRGTNECGIEQSVVAGLPSEKNVFKGITTSDDLLVSSV.

The N-terminal stretch at 1 to 30 (MADSCCIRLHLLASVFLLLFSSFNLQGIAA) is a signal peptide. Positions 31–102 (ENLSKQKLTS…PIVRHDLSLK (72 aa)) are cleaved as a propeptide — activation peptide. Residues Asn32 and Asn69 are each glycosylated (N-linked (GlcNAc...) asparagine). 6 cysteine pairs are disulfide-bonded: Cys116–Cys165, Cys148–Cys191, Cys182–Cys236, Cys183–Cys187, Cys213–Cys240, and Cys222–Cys227. Cys151 is an active-site residue. The N-linked (GlcNAc...) asparagine glycan is linked to Asn171. Active-site residues include His306 and Asn327. Residue Asn330 is glycosylated (N-linked (GlcNAc...) asparagine). Residues 363–379 (NVFKGITTSDDLLVSSV) constitute a propeptide, removed in mature form.

Belongs to the peptidase C1 family.

Its function is as follows. Thiol protease that plays a central role in plant programmed cell death (PCD). In addition to its role in protein degradation, may cleave and/or degrade a number of target proteins, activating signaling towards PCD. Contributes to the increase of caspase-3-like activity after UV-C-induced PCD and is required for abiotic stress-induced PCD. Functions redundantly with CATHB2 and CATHB3 in basal defense and distinct forms of plant programmed cell death (PCD). Participates in the establishment of basal resistance against the bacterial pathogen Pseudomonase syringae pv. tomato DC3000. Required for full levels of PCD during resistance (R) gene-mediated hypersensitive response (HR). Involved in the regulation of senescence, a developmental form of PCD in plants. The polypeptide is Cathepsin B-like protease 1 (Arabidopsis thaliana (Mouse-ear cress)).